The sequence spans 652 residues: Probable L-type lectin-domain containing receptor kinase S.5 (652 aa).

A signal peptide spans 1–20 (MRFSLAWKLLFLILTCKIET). Residues 21–266 (QVKCLKFDFP…EGLKIDGDGN (246 aa)) lie on the Extracellular side of the membrane. The segment at 24 to 257 (CLKFDFPGFN…LNCVRSWSFE (234 aa)) is legume-lectin like. N-linked (GlcNAc...) asparagine glycosylation is found at asparagine 33, asparagine 91, asparagine 97, asparagine 100, asparagine 122, asparagine 139, asparagine 201, and asparagine 244. Residues 267–287 (MLWLWITIPIVFIVGIGAFLG) form a helical membrane-spanning segment. Topologically, residues 288 to 652 (ALYLRSRSKA…INSLTELTGR (365 aa)) are cytoplasmic. The Protein kinase domain maps to 330-622 (FGAENKLGQG…PDVPTERPAF (293 aa)). Residues 336–344 (LGQGGFGMV) and lysine 357 contribute to the ATP site. Aspartate 455 acts as the Proton acceptor in catalysis.

It in the C-terminal section; belongs to the protein kinase superfamily. Ser/Thr protein kinase family. This sequence in the N-terminal section; belongs to the leguminous lectin family.

It is found in the cell membrane. It carries out the reaction L-seryl-[protein] + ATP = O-phospho-L-seryl-[protein] + ADP + H(+). The enzyme catalyses L-threonyl-[protein] + ATP = O-phospho-L-threonyl-[protein] + ADP + H(+). The protein is Probable L-type lectin-domain containing receptor kinase S.5 (LECRKS5) of Arabidopsis thaliana (Mouse-ear cress).